Consider the following 150-residue polypeptide: UPF0260 protein PP_4587 (150 aa).

The protein belongs to the UPF0260 family.

The sequence is that of UPF0260 protein PP_4587 from Pseudomonas putida (strain ATCC 47054 / DSM 6125 / CFBP 8728 / NCIMB 11950 / KT2440).